The chain runs to 156 residues: Movement protein P17 (156 aa).

The homodimerization stretch occupies residues 38–54 (AEDAEEEAIAAQEELEF). Disordered stretches follow at residues 55–80 (PEDE…EVSP) and 106–156 (ASYF…IKRG). The segment at 57 to 156 (DEAQARHSCL…RAAPKLIKRG (100 aa)) is RNA-binding. Phosphoserine occurs at positions 71, 79, 137, and 140. A compositionally biased stretch (basic residues) spans 144–156 (KLRRAAPKLIKRG).

It belongs to the polerovirus movement protein family. As to quaternary structure, homodimer. In terms of processing, expressed as a nonphosphorylated 20kDa form and a phosphorylated 22kDa form. Phosphorylated by a host PKC-related kinase. Serine phosphorylation is required for plamodesma targeting.

It is found in the host cell junction. The protein localises to the host plasmodesma. The protein resides in the host chloroplast envelope. It localises to the host Golgi apparatus. Its subcellular location is the host mitochondrion outer membrane. Functionally, together with movement protein P3a, facilitates long-distance movement of virions in host. Transports viral genome to neighboring plant cells directly through plasmosdesmata, without any budding. The movement protein allows efficient cell to cell propagation, by bypassing the host cell wall barrier. Binds ssRNA. This Potato leafroll virus (strain Potato/Canada/Rowhani/1979) (PLrV) protein is Movement protein P17.